The following is a 599-amino-acid chain: Elongation factor 4 (599 aa).

Positions 2 to 184 (KNIRNFSIIA…RLVRDIPPPE (183 aa)) constitute a tr-type G domain. Residues 14–19 (DHGKST) and 131–134 (NKID) contribute to the GTP site.

This sequence belongs to the TRAFAC class translation factor GTPase superfamily. Classic translation factor GTPase family. LepA subfamily.

The protein localises to the cell inner membrane. It catalyses the reaction GTP + H2O = GDP + phosphate + H(+). Required for accurate and efficient protein synthesis under certain stress conditions. May act as a fidelity factor of the translation reaction, by catalyzing a one-codon backward translocation of tRNAs on improperly translocated ribosomes. Back-translocation proceeds from a post-translocation (POST) complex to a pre-translocation (PRE) complex, thus giving elongation factor G a second chance to translocate the tRNAs correctly. Binds to ribosomes in a GTP-dependent manner. In Cronobacter sakazakii (strain ATCC BAA-894) (Enterobacter sakazakii), this protein is Elongation factor 4.